The sequence spans 482 residues: MVESQKAMPQPKMGRIHRIHFVGIGGVGMCGIAEVLLNLGYEVSGSDLKVSPVTQRLESFGAEIFVGHRAENAAHADVLVVSSAINPANPEVATALERRIPVVPRAEMLAELMRYRHGVAVAGTHGKTTTTSLLASVFAAGGLDPTFVIGGRLTAAGTNAQLGTSRYLIAEADESDASFLHLQPMVAVVTNIDADHMATYEGDFNKLKKTFVEFLHNLPFYGLAVMCLDDPVVREILPQVKRPTVTYGFCEEADIRAINVSQKGMQTHFTVLRRDREPLEVSVNMPGNHNVLNALATIAIATDEGISDEAIVQGLSGFQGVGRRFQVYGELPVEGGSVMLVDDYGHHPTEVAAVIKAVRGGWPSRRLVIVYQPHRYSRTRDLYDDFVQVLGDANVLLLMEVYPAGEEPIPGADSRQLCHSIRQRGKLDPIYIERGAELAPLVKPLLRAGDILLCQGAGDVGGLAPQLMKSPLFAGAKQEKSK.

Gly123–Thr129 is a binding site for ATP.

The protein belongs to the MurCDEF family.

The protein resides in the cytoplasm. It catalyses the reaction UDP-N-acetyl-alpha-D-muramate + L-alanine + ATP = UDP-N-acetyl-alpha-D-muramoyl-L-alanine + ADP + phosphate + H(+). It participates in cell wall biogenesis; peptidoglycan biosynthesis. Cell wall formation. The sequence is that of UDP-N-acetylmuramate--L-alanine ligase from Pseudomonas putida (strain W619).